The following is a 216-amino-acid chain: GTP cyclohydrolase 1 2 (216 aa).

This sequence belongs to the GTP cyclohydrolase I family. Homomer.

It catalyses the reaction GTP + H2O = 7,8-dihydroneopterin 3'-triphosphate + formate + H(+). The protein operates within cofactor biosynthesis; 7,8-dihydroneopterin triphosphate biosynthesis; 7,8-dihydroneopterin triphosphate from GTP: step 1/1. The polypeptide is GTP cyclohydrolase 1 2 (folE2) (Nostoc sp. (strain PCC 7120 / SAG 25.82 / UTEX 2576)).